The sequence spans 289 residues: tRNA(Ile)-lysidine synthase (289 aa).

11-16 (SGGPDS) is a binding site for ATP.

Belongs to the tRNA(Ile)-lysidine synthase family.

The protein resides in the cytoplasm. It carries out the reaction cytidine(34) in tRNA(Ile2) + L-lysine + ATP = lysidine(34) in tRNA(Ile2) + AMP + diphosphate + H(+). Its function is as follows. Ligates lysine onto the cytidine present at position 34 of the AUA codon-specific tRNA(Ile) that contains the anticodon CAU, in an ATP-dependent manner. Cytidine is converted to lysidine, thus changing the amino acid specificity of the tRNA from methionine to isoleucine. This chain is tRNA(Ile)-lysidine synthase, found in Mycoplasma pneumoniae (strain ATCC 29342 / M129 / Subtype 1) (Mycoplasmoides pneumoniae).